Reading from the N-terminus, the 292-residue chain is Homoserine kinase (292 aa).

P80–S90 provides a ligand contact to ATP.

It belongs to the GHMP kinase family. Homoserine kinase subfamily.

It is found in the cytoplasm. It catalyses the reaction L-homoserine + ATP = O-phospho-L-homoserine + ADP + H(+). It participates in amino-acid biosynthesis; L-threonine biosynthesis; L-threonine from L-aspartate: step 4/5. Catalyzes the ATP-dependent phosphorylation of L-homoserine to L-homoserine phosphate. This chain is Homoserine kinase, found in Leuconostoc mesenteroides subsp. mesenteroides (strain ATCC 8293 / DSM 20343 / BCRC 11652 / CCM 1803 / JCM 6124 / NCDO 523 / NBRC 100496 / NCIMB 8023 / NCTC 12954 / NRRL B-1118 / 37Y).